We begin with the raw amino-acid sequence, 304 residues long: Nucleotide-binding protein ROP_69550 (304 aa).

Residue 24–31 (GLSGAGLQ) participates in ATP binding. 75–78 (DVRS) contacts GTP.

Belongs to the RapZ-like family.

Displays ATPase and GTPase activities. The chain is Nucleotide-binding protein ROP_69550 from Rhodococcus opacus (strain B4).